We begin with the raw amino-acid sequence, 102 residues long: Cytochrome b (102 aa).

3 helical membrane-spanning segments follow: residues 1–21 (FGSLLGLCLATQILTGLFLAM), 45–66 (WLIRNIHANGASFFFICIYLHI), and 81–101 (WNIGVVLLLLVMMTAFVGYVL). Heme b-binding residues include H51 and H65.

The protein belongs to the cytochrome b family. The cytochrome bc1 complex contains 3 respiratory subunits (MT-CYB, CYC1 and UQCRFS1), 2 core proteins (UQCRC1 and UQCRC2) and probably 6 low-molecular weight proteins. Heme b serves as cofactor.

It localises to the mitochondrion inner membrane. Its function is as follows. Component of the ubiquinol-cytochrome c reductase complex (complex III or cytochrome b-c1 complex) that is part of the mitochondrial respiratory chain. The b-c1 complex mediates electron transfer from ubiquinol to cytochrome c. Contributes to the generation of a proton gradient across the mitochondrial membrane that is then used for ATP synthesis. The protein is Cytochrome b (mt-cyb) of Megalops atlanticus (Tarpon).